Consider the following 260-residue polypeptide: Cell division protein FtsQ (260 aa).

The Cytoplasmic segment spans residues 1-26 (MINKVLLEGQRITRSPQVKQHACGAS). The helical transmembrane segment at 27 to 47 (FFLVVLLLIGGLLYSTISWMW) threads the bilayer. At 48–260 (DEQRLPLSKL…QELTQEKNDD (213 aa)) the chain is on the periplasmic side. The 71-residue stretch at 52–122 (LPLSKLVLQG…DTIKVYLTEY (71 aa)) folds into the POTRA domain.

It belongs to the FtsQ/DivIB family. FtsQ subfamily. Part of a complex composed of FtsB, FtsL and FtsQ.

The protein localises to the cell inner membrane. Its function is as follows. Essential cell division protein. May link together the upstream cell division proteins, which are predominantly cytoplasmic, with the downstream cell division proteins, which are predominantly periplasmic. May control correct divisome assembly. The polypeptide is Cell division protein FtsQ (Vibrio cholerae serotype O1 (strain ATCC 39315 / El Tor Inaba N16961)).